Consider the following 362-residue polypeptide: F-box protein At1g54550 (362 aa).

Residues 1-47 (MATVTDLPDDLVREIFSRVPLTSLRAVRSTCKKWNAISKYDILGKKA) form the F-box domain.

This is F-box protein At1g54550 from Arabidopsis thaliana (Mouse-ear cress).